The primary structure comprises 820 residues: MDTEGFGELLQQAEQLAAETEAVSELPHVERNLQEIQQAGERLRSRTLTRTSQDTADVKASILLGSRGLDIFHISQRLESLSAATTFEPLEPVKDTDIQGFLKNERDNALLSAIEESRRRTFLLAEEYHRDSMLVQWEQVKQRVLHTLLGAGEDALDFSQEVEPSFVSEVGVPGRSALDSVEVAYSRQIYVFNEKIVNGHLQPNLGDLCASVAESLDDKNVSEMWLMVKQMTDVLLVPAKDTLKSRVSVDMQMAFVRQALQFLENSYKNYTLVTVFGNLHQAQLGGVPGTYQLVCSFLNIKLPTPLPGRQDGEVEGHPVWALIYFCLRCGDLSAAMQVVNKAQHQLGDFKIWFQEYMNSPDRRLSPATENKLRLHYRRVLRNSADPYKRAVYCLIGKCDIGDNHGEVADKTEDYLWLKLNQVCFDEDGSSSPQDRMTLAQLQKQLLEDYGESHFSASHQPFLYFQVLFLTAQFEAAIAFLFRVERLRSHAVHVALVLYELKLLLKSSGQSAQLLSQEAGDPPMVRRLNFIRLLMLYTRKFESTDPREALQYFYFLRNEKDSQGENMFMRCVSELVIESREFDMLLGRLEKDGSRKPGVIDKFAGDTRAIITKVASEAENKGLFEEAVKLYELAKNADKVLELMNKLLSPVIAQVSEPQSNKERLKNMAVAIAERYRANGVAGEKSVDNTFYLLLDLMTFFDEYHAGHIDRAYDVIERLKLVPLSQDSVEERVAAFRNFSDEVRHNLSEVLLATMNILFTQYKRLKGAAAGTPGRPQRTLEDRDMLLRIQARALITFAGMIPYRMAGDTNARLVQMEVLMN.

This sequence belongs to the nucleoporin interacting component (NIC) family.

Its subcellular location is the nucleus membrane. It is found in the nucleus. The protein resides in the nuclear pore complex. In terms of biological role, plays a role in the nuclear pore complex (NPC) assembly and/or maintenance. In Danio rerio (Zebrafish), this protein is Nuclear pore complex protein Nup93 (dye).